Consider the following 688-residue polypeptide: Potassium-transporting ATPase ATP-binding subunit (688 aa).

4 helical membrane-spanning segments follow: residues 34-54, 62-82, 219-239, and 260-280; these read PVMFVVYLGSWLTTLIWLAIL, AMFTGSIALWLWFTVLFANMA, VALTILLVALTIVFLLATATL, and VLVALLVCLIPTTIGGLLSAI. Aspartate 313 functions as the 4-aspartylphosphate intermediate in the catalytic mechanism. Residues aspartate 350, glutamate 354, 383–390, and lysine 401 contribute to the ATP site; that span reads FSAQTRMS. Mg(2+)-binding residues include aspartate 524 and aspartate 528. Transmembrane regions (helical) follow at residues 594 to 614, 622 to 642, and 662 to 682; these read FAIIPAAFAATYPQLNALNIM, AILSAVIFNALVIVFLIPLAL, and IYGLGGLLVPFVGIKLIDLLL.

It belongs to the cation transport ATPase (P-type) (TC 3.A.3) family. Type IA subfamily. The system is composed of three essential subunits: KdpA, KdpB and KdpC.

The protein resides in the cell inner membrane. The enzyme catalyses K(+)(out) + ATP + H2O = K(+)(in) + ADP + phosphate + H(+). In terms of biological role, part of the high-affinity ATP-driven potassium transport (or Kdp) system, which catalyzes the hydrolysis of ATP coupled with the electrogenic transport of potassium into the cytoplasm. This subunit is responsible for energy coupling to the transport system and for the release of the potassium ions to the cytoplasm. The polypeptide is Potassium-transporting ATPase ATP-binding subunit (Yersinia pseudotuberculosis serotype O:1b (strain IP 31758)).